Here is a 504-residue protein sequence, read N- to C-terminus: Maturase K (504 aa).

This sequence belongs to the intron maturase 2 family. MatK subfamily.

Its subcellular location is the plastid. It is found in the chloroplast. In terms of biological role, usually encoded in the trnK tRNA gene intron. Probably assists in splicing its own and other chloroplast group II introns. This chain is Maturase K, found in Draba nemorosa (Woodland whitlowgrass).